A 551-amino-acid polypeptide reads, in one-letter code: Solute carrier family 22 member 4 (551 aa).

The Cytoplasmic segment spans residues 1–20; that stretch reads MRDYDEAIAFLGEWGPFQRL. A helical transmembrane segment spans residues 21 to 41; sequence IFFLLSASIIPNGFNGMSVVF. At 42–141 the chain is on the extracellular side; it reads LAGTPEHRCR…WNLVCEDNWK (100 aa). Asn-57, Asn-64, and Asn-91 each carry an N-linked (GlcNAc...) asparagine glycan. A helical membrane pass occupies residues 142–162; the sequence is VPLTTSLFFVGVLLGSFVSGQ. The Cytoplasmic segment spans residues 163–171; the sequence is LSDRFGRKN. Residues 172-192 form a helical membrane-spanning segment; that stretch reads VLFATMAVQTGFSFLQIFSIS. The Extracellular portion of the chain corresponds to 193–197; the sequence is WEMFT. Residues 198-218 traverse the membrane as a helical segment; the sequence is VLFLIVGMGQISNYVVAFILG. An ATP-binding site is contributed by 218 to 225; that stretch reads GTEILGKS. Residues 219–232 lie on the Cytoplasmic side of the membrane; that stretch reads TEILGKSVRIIFST. The helical transmembrane segment at 233 to 253 threads the bilayer; the sequence is LGVCTFFAVGYMLLPLFAYFI. The Extracellular segment spans residues 254 to 257; that stretch reads RDWR. The helical transmembrane segment at 258–278 threads the bilayer; it reads MLLLALTVPGVLCVPLWWFIP. The Cytoplasmic portion of the chain corresponds to 279-337; that stretch reads ESPRWLISQRRFREAEDIIQKAAKMNNIAVPAVIFDSVEELNPLKQQKAFILDLFRTWN. A helical transmembrane segment spans residues 338 to 358; that stretch reads IAIMTIMSLLLWMLTSVGYFA. The Extracellular portion of the chain corresponds to 359 to 371; sequence LSLDTPNLHGDAY. The helical transmembrane segment at 372–392 threads the bilayer; the sequence is LNCFLSALIEIPAYITAWLLL. The Cytoplasmic segment spans residues 393–399; that stretch reads RTLPRRY. A helical membrane pass occupies residues 400 to 420; that stretch reads IIAAVLFWGGGVLLFIQLVPV. The Extracellular segment spans residues 421–426; that stretch reads DYYFLS. The chain crosses the membrane as a helical span at residues 427–447; that stretch reads IGLVMLGKFGITSAFSMLYVF. Over 448-460 the chain is Cytoplasmic; the sequence is TAELYPTMVRNMA. The chain crosses the membrane as a helical span at residues 461–481; the sequence is VGVTSMASRVGSIIAPYFVYL. Topologically, residues 482-486 are extracellular; sequence GAYNR. A helical transmembrane segment spans residues 487–507; sequence MLPYIVMGSLTVLIGILTLFF. The Cytoplasmic portion of the chain corresponds to 508 to 551; the sequence is PESLGMTLPETLEQMQKVKWFRSGKKTRDSMETEENPKVLITAF.

Belongs to the major facilitator (TC 2.A.1) superfamily. Organic cation transporter (TC 2.A.1.19) family. Interacts with PDZK1.

The protein resides in the apical cell membrane. It localises to the basal cell membrane. The protein localises to the mitochondrion membrane. It catalyses the reaction ergothioneine(out) + Na(+)(out) = ergothioneine(in) + Na(+)(in). It carries out the reaction acetylcholine(in) = acetylcholine(out). The enzyme catalyses (R)-carnitine(out) + Na(+)(out) = (R)-carnitine(in) + Na(+)(in). The catalysed reaction is glycine betaine(out) + Na(+)(out) = glycine betaine(in) + Na(+)(in). Its activity is regulated as follows. Allosterically activated by intracellular ATP. Its function is as follows. Transporter that mediates the transport of endogenous and microbial zwitterions and organic cations. Functions as a Na(+)-dependent and pH-dependent high affinity microbial symporter of potent food-derived antioxidant ergothioeine. Transports one sodium ion with one ergothioeine molecule. Involved in the absorption of ergothioneine from the luminal/apical side of the small intestine and renal tubular cells, and into non-parenchymal liver cells, thereby contributing to maintain steady-state ergothioneine level in the body. Also mediates the bidirectional transport of acetycholine, although the exact transport mechanism has not been fully identified yet. Most likely exports anti-inflammatory acetylcholine in non-neuronal tissues, thereby contributing to the non-neuronal cholinergic system. Displays a general physiological role linked to better survival by controlling inflammation and oxidative stress, which may be related to ergothioneine and acetycholine transports. May also function as a low-affinity Na(+)-dependent transporter of L-carnitine through the mitochondrial membrane, thereby maintaining intracellular carnitine homeostasis. May contribute to regulate the transport of cationic compounds in testis across the blood-testis-barrier. In Papio anubis (Olive baboon), this protein is Solute carrier family 22 member 4 (SLC22A4).